The chain runs to 474 residues: MAKEISSELLNTILTRVGGPGNIASCGNCMTRLRLGVHDSSLVDPNIKTLEGVKGVILTSDQVQVVFGPGKAHRAAKAMSELLGEAPVQDAAEIAAQNKRQLKAKQTSGVQQFLAKFATIFTPLIPGFIAAGLLLGIATLIATVMHVPADAQGTLPDALNFMKVFSKGLFTFLVILVGYNAAQAFGGTGVNGAIIAALFLLGYNPAATTGYYAGFHDFFGLPIDPRGNIIGVLIAAWACARIEGMVRRFMPDDLDMLLTSLITLLITATLAYLIIMPLGGWLFEGMSWLFMHLNSNPFGCAVLAGLFLIAVVFGVHQGFIPVYLALMDSQGFNSLFPILSMAGAGQVGAALALYWRAQPHSALRSQVRGAIIPGLLGVGEPLIYGVTLPRMKPFVTACLGGAAGGLFIGLIAWWGLPMGLNSAFGPSGLVALPLMTSAQGILPAMAVYAGGILVAWVCGFIFTTLFGCRNVNLD.

The PTS EIIB type-1 domain occupies 1–89; it reads MAKEISSELL…SELLGEAPVQ (89 aa). The Cytoplasmic segment spans residues 1 to 123; sequence MAKEISSELL…LAKFATIFTP (123 aa). The active-site Phosphocysteine intermediate; for EIIB activity is the cysteine 29. The 360-residue stretch at 115-474 folds into the PTS EIIC type-1 domain; the sequence is AKFATIFTPL…LFGCRNVNLD (360 aa). A helical membrane pass occupies residues 124–144; that stretch reads LIPGFIAAGLLLGIATLIATV. Residues 145–157 are Periplasmic-facing; sequence MHVPADAQGTLPD. A helical transmembrane segment spans residues 158–178; the sequence is ALNFMKVFSKGLFTFLVILVG. Residues 179 to 180 lie on the Cytoplasmic side of the membrane; sequence YN. The chain crosses the membrane as a helical span at residues 181–201; sequence AAQAFGGTGVNGAIIAALFLL. Residues 202 to 217 lie on the Periplasmic side of the membrane; sequence GYNPAATTGYYAGFHD. The chain crosses the membrane as a helical span at residues 218–238; it reads FFGLPIDPRGNIIGVLIAAWA. Over 239 to 260 the chain is Cytoplasmic; it reads CARIEGMVRRFMPDDLDMLLTS. A helical transmembrane segment spans residues 261–281; sequence LITLLITATLAYLIIMPLGGW. Over 282-301 the chain is Periplasmic; it reads LFEGMSWLFMHLNSNPFGCA. Residues 302-322 traverse the membrane as a helical segment; that stretch reads VLAGLFLIAVVFGVHQGFIPV. Residues 323–334 lie on the Cytoplasmic side of the membrane; the sequence is YLALMDSQGFNS. The helical transmembrane segment at 335-355 threads the bilayer; the sequence is LFPILSMAGAGQVGAALALYW. Residues 356-368 lie on the Periplasmic side of the membrane; sequence RAQPHSALRSQVR. Residues 369–389 traverse the membrane as a helical segment; sequence GAIIPGLLGVGEPLIYGVTLP. Over 390-393 the chain is Cytoplasmic; that stretch reads RMKP. Residues 394-414 form a helical membrane-spanning segment; it reads FVTACLGGAAGGLFIGLIAWW. At 415–440 the chain is on the periplasmic side; sequence GLPMGLNSAFGPSGLVALPLMTSAQG. A helical transmembrane segment spans residues 441-461; the sequence is ILPAMAVYAGGILVAWVCGFI. Topologically, residues 462-474 are cytoplasmic; that stretch reads FTTLFGCRNVNLD.

Its subcellular location is the cell inner membrane. The catalysed reaction is N-acetyl-beta-D-muramate(out) + N(pros)-phospho-L-histidyl-[protein] = N-acetyl-beta-D-muramate 6-phosphate(in) + L-histidyl-[protein]. Its function is as follows. The phosphoenolpyruvate-dependent sugar phosphotransferase system (sugar PTS), a major carbohydrate active transport system, catalyzes the phosphorylation of incoming sugar substrates concomitantly with their translocation across the cell membrane. This system is involved in N-acetylmuramic acid (MurNAc) transport, yielding cytoplasmic MurNAc-6-P. Is responsible for growth on MurNAc as the sole source of carbon and energy. Is also able to take up anhydro-N-acetylmuramic acid (anhMurNAc), but cannot phosphorylate the carbon 6, probably because of the 1,6-anhydro ring. This is PTS system N-acetylmuramic acid-specific EIIBC component (murP) from Escherichia coli (strain K12).